Here is a 476-residue protein sequence, read N- to C-terminus: Glucose-1-phosphate adenylyltransferase (476 aa).

Alpha-D-glucose 1-phosphate is bound by residues tyrosine 114, glycine 179, 194 to 195 (EK), and serine 212.

The protein belongs to the bacterial/plant glucose-1-phosphate adenylyltransferase family. In terms of assembly, homotetramer.

The enzyme catalyses alpha-D-glucose 1-phosphate + ATP + H(+) = ADP-alpha-D-glucose + diphosphate. It participates in glycan biosynthesis; glycogen biosynthesis. Involved in the biosynthesis of ADP-glucose, a building block required for the elongation reactions to produce glycogen. Catalyzes the reaction between ATP and alpha-D-glucose 1-phosphate (G1P) to produce pyrophosphate and ADP-Glc. The polypeptide is Glucose-1-phosphate adenylyltransferase (Yersinia pestis bv. Antiqua (strain Antiqua)).